The following is a 692-amino-acid chain: Elongation factor G (692 aa).

The tr-type G domain maps to 8–282 (AKTRNIGIMA…AVIAYLPSPL (275 aa)). GTP contacts are provided by residues 17–24 (AHVDAGKT), 81–85 (DTPGH), and 135–138 (NKMD).

This sequence belongs to the TRAFAC class translation factor GTPase superfamily. Classic translation factor GTPase family. EF-G/EF-2 subfamily.

The protein localises to the cytoplasm. Catalyzes the GTP-dependent ribosomal translocation step during translation elongation. During this step, the ribosome changes from the pre-translocational (PRE) to the post-translocational (POST) state as the newly formed A-site-bound peptidyl-tRNA and P-site-bound deacylated tRNA move to the P and E sites, respectively. Catalyzes the coordinated movement of the two tRNA molecules, the mRNA and conformational changes in the ribosome. The polypeptide is Elongation factor G (fus) (Streptococcus pyogenes serotype M1).